A 3582-amino-acid polypeptide reads, in one-letter code: Ubiquitin carboxyl-terminal hydrolase 34 (3582 aa).

Residues Ser-352, Ser-486, Ser-487, and Ser-490 each carry the phosphoserine modification. Disordered regions lie at residues 503 to 533 (EEEE…HQSG), 551 to 670 (QQRL…ELRN), 682 to 705 (GESQ…VFNT), 775 to 801 (HHHH…DGHM), and 1496 to 1515 (TGSY…DQVE). Over residues 510-524 (AAPSPWSPAASPQSS) the composition is skewed to low complexity. Polar residues predominate over residues 560–570 (SMQGSSDETAN). The segment covering 571–590 (SGEDGSSGPGSSSGHSDGSS) has biased composition (low complexity). The span at 591 to 609 (NEVNSSHASQSAGSPGSEV) shows a compositional bias: polar residues. Acidic residues predominate over residues 610–653 (QSEDIADIEALKEEEEEEEEEEEEEEEEDDEEEEDEEEDDDDDD). Over residues 684-697 (SQGTSERNGTNSGT) the composition is skewed to polar residues. Residues 775-798 (HHHHHHHHHHHHHHHHHHHHHHHD) show a composition bias toward basic residues. Positions 1504–1514 (PDSDDSSEDQV) are enriched in acidic residues. Ser-1506 bears the Phosphoserine mark. One can recognise a USP domain in the interval 1931 to 2276 (VGLTNLGATC…SAYMLFYKRM (346 aa)). The Nucleophile role is filled by Cys-1940. His-2201 (proton acceptor) is an active-site residue. At Ser-2525 the chain carries Phosphoserine. Positions 3369-3484 (SLQEQEAKER…QSNNGRFDDC (116 aa)) are disordered. A compositionally biased stretch (basic and acidic residues) spans 3373-3384 (QEAKERKTKDDE). 2 positions are modified to phosphoserine: Ser-3395 and Ser-3396. Phosphothreonine is present on Thr-3418. A phosphoserine mark is found at Ser-3423 and Ser-3443. The segment covering 3463–3484 (DGSHIRSQHAEEQSNNGRFDDC) has biased composition (basic and acidic residues). At Ser-3539 the chain carries Phosphoserine.

The protein belongs to the peptidase C19 family. As to quaternary structure, interacts with AXIN1 and AXIN2.

The enzyme catalyses Thiol-dependent hydrolysis of ester, thioester, amide, peptide and isopeptide bonds formed by the C-terminal Gly of ubiquitin (a 76-residue protein attached to proteins as an intracellular targeting signal).. In terms of biological role, ubiquitin hydrolase that can remove conjugated ubiquitin from AXIN1 and AXIN2, thereby acting as a regulator of Wnt signaling pathway. Acts as an activator of the Wnt signaling pathway downstream of the beta-catenin destruction complex by deubiquitinating and stabilizing AXIN1 and AXIN2, leading to promote nuclear accumulation of AXIN1 and AXIN2 and positively regulate beta-catenin (CTNBB1)-mediated transcription. Recognizes and hydrolyzes the peptide bond at the C-terminal Gly of ubiquitin. Involved in the processing of poly-ubiquitin precursors as well as that of ubiquitinated proteins. In Mus musculus (Mouse), this protein is Ubiquitin carboxyl-terminal hydrolase 34 (Usp34).